The chain runs to 212 residues: Pyridoxine/pyridoxamine 5'-phosphate oxidase (212 aa).

Substrate-binding positions include 8–11 (RREY) and K66. FMN is bound by residues 61–66 (RIVLLK), 76–77 (FT), R82, K83, and Q105. Residues Y123, R127, and S131 each contribute to the substrate site. Residues 140–141 (QS) and W185 each bind FMN. Substrate is bound at residue 191-193 (RLH). An FMN-binding site is contributed by R195.

This sequence belongs to the pyridoxamine 5'-phosphate oxidase family. As to quaternary structure, homodimer. It depends on FMN as a cofactor.

It catalyses the reaction pyridoxamine 5'-phosphate + O2 + H2O = pyridoxal 5'-phosphate + H2O2 + NH4(+). The catalysed reaction is pyridoxine 5'-phosphate + O2 = pyridoxal 5'-phosphate + H2O2. The protein operates within cofactor metabolism; pyridoxal 5'-phosphate salvage; pyridoxal 5'-phosphate from pyridoxamine 5'-phosphate: step 1/1. It functions in the pathway cofactor metabolism; pyridoxal 5'-phosphate salvage; pyridoxal 5'-phosphate from pyridoxine 5'-phosphate: step 1/1. Catalyzes the oxidation of either pyridoxine 5'-phosphate (PNP) or pyridoxamine 5'-phosphate (PMP) into pyridoxal 5'-phosphate (PLP). The protein is Pyridoxine/pyridoxamine 5'-phosphate oxidase of Shewanella denitrificans (strain OS217 / ATCC BAA-1090 / DSM 15013).